A 194-amino-acid chain; its full sequence is Fe/S biogenesis protein NfuA (194 aa).

Cysteine 151 and cysteine 154 together coordinate [4Fe-4S] cluster.

Belongs to the NfuA family. Homodimer. Requires [4Fe-4S] cluster as cofactor.

In terms of biological role, involved in iron-sulfur cluster biogenesis. Binds a 4Fe-4S cluster, can transfer this cluster to apoproteins, and thereby intervenes in the maturation of Fe/S proteins. Could also act as a scaffold/chaperone for damaged Fe/S proteins. In Aliivibrio salmonicida (strain LFI1238) (Vibrio salmonicida (strain LFI1238)), this protein is Fe/S biogenesis protein NfuA.